A 285-amino-acid polypeptide reads, in one-letter code: Putative alkaline ceramidase dcd3B (285 aa).

Helical transmembrane passes span 34-54 (TFSS…MMSA), 77-97 (VLFS…YHAT), and 104-124 (LFDE…ILTI). Residue Asn-131 is glycosylated (N-linked (GlcNAc...) asparagine). 4 helical membrane-spanning segments follow: residues 141-161 (RFLP…ITII), 166-186 (IILQ…SYMY), 200-220 (PKKF…SWLT), and 236-256 (LHAV…QFFI).

It belongs to the alkaline ceramidase family.

It localises to the membrane. The polypeptide is Putative alkaline ceramidase dcd3B (dcd3B) (Dictyostelium discoideum (Social amoeba)).